A 365-amino-acid chain; its full sequence is Chorismate synthase (365 aa).

2 residues coordinate NADP(+): Arg-48 and Arg-54. FMN is bound by residues 125–127 (RSS), 238–239 (NA), Ala-278, 293–297 (KPTSS), and Arg-319.

This sequence belongs to the chorismate synthase family. In terms of assembly, homotetramer. It depends on FMNH2 as a cofactor.

The enzyme catalyses 5-O-(1-carboxyvinyl)-3-phosphoshikimate = chorismate + phosphate. It functions in the pathway metabolic intermediate biosynthesis; chorismate biosynthesis; chorismate from D-erythrose 4-phosphate and phosphoenolpyruvate: step 7/7. In terms of biological role, catalyzes the anti-1,4-elimination of the C-3 phosphate and the C-6 proR hydrogen from 5-enolpyruvylshikimate-3-phosphate (EPSP) to yield chorismate, which is the branch point compound that serves as the starting substrate for the three terminal pathways of aromatic amino acid biosynthesis. This reaction introduces a second double bond into the aromatic ring system. This Pseudoalteromonas translucida (strain TAC 125) protein is Chorismate synthase.